The primary structure comprises 487 residues: Ribosome biogenesis protein YTM1 (487 aa).

The tract at residues 13–95 is ubiquitin-like (UBL) domain; that stretch reads VKVTFTTNEA…ETNLTLQYVR (83 aa). 5 WD repeats span residues 122–161, 168–206, 217–256, 379–419, and 451–487; these read SPAGRWSGENFSRGQERILSASYDGLLRIWNASGEVLVTA, GHSASIKAAKFISSTQIASTGMDRSVRVWKYTDPGASGQ, GHRASVDSLEVHGPSKRILTASADGSVALWSASKSSSPEA, GHTN…PASG, and GEGAKVFGVVWDRELGILSGGEDKKVQVNRGRDVVRE. The tract at residues 253–277 is disordered; the sequence is SPEADASLLPNAHTSKRRKVASSVT.

It belongs to the WD repeat WDR12/YTM1 family. In terms of assembly, component of the NOP7 complex, composed of ERB1, NOP7 and YTM1. The complex is held together by ERB1, which interacts with NOP7 via its N-terminal domain and with YTM1 via a high-affinity interaction between the seven-bladed beta-propeller domains of the 2 proteins. The NOP7 complex associates with the 66S pre-ribosome. Interacts (via UBL domain) with MDN1 (via VWFA/MIDAS domain).

It localises to the nucleus. Its subcellular location is the nucleolus. It is found in the nucleoplasm. Component of the NOP7 complex, which is required for maturation of the 25S and 5.8S ribosomal RNAs and formation of the 60S ribosome. This chain is Ribosome biogenesis protein YTM1, found in Podospora anserina (strain S / ATCC MYA-4624 / DSM 980 / FGSC 10383) (Pleurage anserina).